A 120-amino-acid polypeptide reads, in one-letter code: Purkinje cell protein 2 (120 aa).

GoLoco domains lie at 7 to 29 and 47 to 69; these read QEGF…RCSL and MDNL…RVTV. The segment at 16–120 is disordered; that stretch reads HVQGDRMEEQ…SSPQPQTQAP (105 aa). Positions 108–120 are enriched in polar residues; the sequence is RRNSSPQPQTQAP. Ser111 is modified (phosphoserine).

As to expression, cerebellum (Purkinje cells) and retinal bipolar neurons.

In terms of biological role, may function as a cell-type specific modulator for G protein-mediated cell signaling. The sequence is that of Purkinje cell protein 2 (Pcp2) from Mus musculus (Mouse).